The primary structure comprises 304 residues: Aspartate carbamoyltransferase catalytic subunit (304 aa).

Residues R54 and T55 each coordinate carbamoyl phosphate. Residue K83 participates in L-aspartate binding. The carbamoyl phosphate site is built by R104, H132, and Q135. L-aspartate contacts are provided by R165 and R226. Positions 265 and 266 each coordinate carbamoyl phosphate.

This sequence belongs to the aspartate/ornithine carbamoyltransferase superfamily. ATCase family. Heterooligomer of catalytic and regulatory chains.

The enzyme catalyses carbamoyl phosphate + L-aspartate = N-carbamoyl-L-aspartate + phosphate + H(+). The protein operates within pyrimidine metabolism; UMP biosynthesis via de novo pathway; (S)-dihydroorotate from bicarbonate: step 2/3. Its function is as follows. Catalyzes the condensation of carbamoyl phosphate and aspartate to form carbamoyl aspartate and inorganic phosphate, the committed step in the de novo pyrimidine nucleotide biosynthesis pathway. The polypeptide is Aspartate carbamoyltransferase catalytic subunit (Pyrobaculum neutrophilum (strain DSM 2338 / JCM 9278 / NBRC 100436 / V24Sta) (Thermoproteus neutrophilus)).